Reading from the N-terminus, the 230-residue chain is MSERAPVVTVDGPSGAGKGTISQLLAERLGYKLLDSGAIYRVLALAAIHHNVELDNEESLTLLAAHLDVQFVTGNEGKGIKVVLEGEDVSTTIRSQECSNAASKVAAFPRVREALLRRQRAFAEAPGLIADGRDMGTVVFPATPAKLYLTATAEERAQRRYNQLQDKGFDVNIDQLLSEIKERDDRDMNRSVAPLVPAEDALIIDTTNINIEDVLDLALTHIHQKLQVPA.

Residue 12–20 (GPSGAGKGT) coordinates ATP.

It belongs to the cytidylate kinase family. Type 1 subfamily.

Its subcellular location is the cytoplasm. The enzyme catalyses CMP + ATP = CDP + ADP. It carries out the reaction dCMP + ATP = dCDP + ADP. The protein is Cytidylate kinase of Shewanella halifaxensis (strain HAW-EB4).